The sequence spans 417 residues: Gamma-glutamyl phosphate reductase (417 aa).

It belongs to the gamma-glutamyl phosphate reductase family.

Its subcellular location is the cytoplasm. It catalyses the reaction L-glutamate 5-semialdehyde + phosphate + NADP(+) = L-glutamyl 5-phosphate + NADPH + H(+). It participates in amino-acid biosynthesis; L-proline biosynthesis; L-glutamate 5-semialdehyde from L-glutamate: step 2/2. Its function is as follows. Catalyzes the NADPH-dependent reduction of L-glutamate 5-phosphate into L-glutamate 5-semialdehyde and phosphate. The product spontaneously undergoes cyclization to form 1-pyrroline-5-carboxylate. The chain is Gamma-glutamyl phosphate reductase from Polynucleobacter asymbioticus (strain DSM 18221 / CIP 109841 / QLW-P1DMWA-1) (Polynucleobacter necessarius subsp. asymbioticus).